A 515-amino-acid polypeptide reads, in one-letter code: ATP synthase subunit alpha (515 aa).

Position 171-178 (171-178 (GDRQTGKT)) interacts with ATP.

Belongs to the ATPase alpha/beta chains family. As to quaternary structure, F-type ATPases have 2 components, CF(1) - the catalytic core - and CF(0) - the membrane proton channel. CF(1) has five subunits: alpha(3), beta(3), gamma(1), delta(1), epsilon(1). CF(0) has three main subunits: a(1), b(2) and c(9-12). The alpha and beta chains form an alternating ring which encloses part of the gamma chain. CF(1) is attached to CF(0) by a central stalk formed by the gamma and epsilon chains, while a peripheral stalk is formed by the delta and b chains.

It is found in the cell inner membrane. The catalysed reaction is ATP + H2O + 4 H(+)(in) = ADP + phosphate + 5 H(+)(out). In terms of biological role, produces ATP from ADP in the presence of a proton gradient across the membrane. The alpha chain is a regulatory subunit. This Xanthomonas oryzae pv. oryzae (strain MAFF 311018) protein is ATP synthase subunit alpha.